We begin with the raw amino-acid sequence, 475 residues long: Ribulose bisphosphate carboxylase large chain (475 aa).

Positions 1 to 2 (MS) are excised as a propeptide. Proline 3 is subject to N-acetylproline. N6,N6,N6-trimethyllysine is present on lysine 14. Substrate contacts are provided by asparagine 123 and threonine 173. Lysine 175 serves as the catalytic Proton acceptor. Lysine 177 is a substrate binding site. Residues lysine 201, aspartate 203, and glutamate 204 each contribute to the Mg(2+) site. Lysine 201 is subject to N6-carboxylysine. Histidine 294 functions as the Proton acceptor in the catalytic mechanism. 3 residues coordinate substrate: arginine 295, histidine 327, and serine 379.

The protein belongs to the RuBisCO large chain family. Type I subfamily. In terms of assembly, heterohexadecamer of 8 large chains and 8 small chains; disulfide-linked. The disulfide link is formed within the large subunit homodimers. The cofactor is Mg(2+). In terms of processing, the disulfide bond which can form in the large chain dimeric partners within the hexadecamer appears to be associated with oxidative stress and protein turnover.

It localises to the plastid. The protein localises to the chloroplast. It carries out the reaction 2 (2R)-3-phosphoglycerate + 2 H(+) = D-ribulose 1,5-bisphosphate + CO2 + H2O. The enzyme catalyses D-ribulose 1,5-bisphosphate + O2 = 2-phosphoglycolate + (2R)-3-phosphoglycerate + 2 H(+). Its function is as follows. RuBisCO catalyzes two reactions: the carboxylation of D-ribulose 1,5-bisphosphate, the primary event in carbon dioxide fixation, as well as the oxidative fragmentation of the pentose substrate in the photorespiration process. Both reactions occur simultaneously and in competition at the same active site. The protein is Ribulose bisphosphate carboxylase large chain of Pelargonium hortorum (Common geranium).